A 220-amino-acid polypeptide reads, in one-letter code: Probable nicotinate-nucleotide adenylyltransferase (220 aa).

This sequence belongs to the NadD family.

The catalysed reaction is nicotinate beta-D-ribonucleotide + ATP + H(+) = deamido-NAD(+) + diphosphate. It participates in cofactor biosynthesis; NAD(+) biosynthesis; deamido-NAD(+) from nicotinate D-ribonucleotide: step 1/1. Its function is as follows. Catalyzes the reversible adenylation of nicotinate mononucleotide (NaMN) to nicotinic acid adenine dinucleotide (NaAD). The protein is Probable nicotinate-nucleotide adenylyltransferase of Laribacter hongkongensis (strain HLHK9).